The chain runs to 159 residues: Lipoprotein LpqH (159 aa).

A signal peptide spans 1–21 (MKRGLTVAVAGAAILVAGLSG). The N-palmitoyl cysteine moiety is linked to residue cysteine 22. A lipid anchor (S-diacylglycerol cysteine) is attached at cysteine 22. The tract at residues 24–51 (SNKSTTGSGETTTAAGTTASPGAASGPK) is disordered. Positions 27-49 (STTGSGETTTAAGTTASPGAASG) are enriched in low complexity.

The protein belongs to the mycobacterial 19 kDa antigen family. Post-translationally, modified by Lgt on Cys-22 with an S-linked diacylglycerol with a mixture of C16, C18 and C19 fatty acids, signal peptide is removed by LspA, modifed by Lnt with an amide-linked mixture of C16 and C19 fatty acids.

The protein resides in the cell membrane. Might be involved in ligand transport. A host TLR2 agonist, modifies host gene expression in response to pathogen. This Mycobacterium bovis (strain ATCC BAA-935 / AF2122/97) protein is Lipoprotein LpqH (lpqH).